A 251-amino-acid polypeptide reads, in one-letter code: Spermatogenesis-associated protein 46 (251 aa).

It is found in the nucleus membrane. Plays a role in spermiogenesis and fertilization. The protein is Spermatogenesis-associated protein 46 (SPATA46) of Macaca fascicularis (Crab-eating macaque).